A 237-amino-acid polypeptide reads, in one-letter code: Protein UL24 homolog (237 aa).

This sequence belongs to the herpesviridae UL24 family.

The chain is Protein UL24 homolog (20) from Equus caballus (Horse).